Here is a 152-residue protein sequence, read N- to C-terminus: 3-dehydroquinate dehydratase (152 aa).

Tyr26 functions as the Proton acceptor in the catalytic mechanism. 3 residues coordinate substrate: Asn78, His84, and Asp91. His104 functions as the Proton donor in the catalytic mechanism. Substrate contacts are provided by residues 105 to 106 (IS) and Arg115.

The protein belongs to the type-II 3-dehydroquinase family. As to quaternary structure, homododecamer.

It catalyses the reaction 3-dehydroquinate = 3-dehydroshikimate + H2O. The protein operates within metabolic intermediate biosynthesis; chorismate biosynthesis; chorismate from D-erythrose 4-phosphate and phosphoenolpyruvate: step 3/7. Catalyzes a trans-dehydration via an enolate intermediate. In Buchnera aphidicola subsp. Cinara cedri (strain Cc), this protein is 3-dehydroquinate dehydratase.